The chain runs to 736 residues: Replication restart protein PriA (736 aa).

In terms of domain architecture, Helicase ATP-binding spans 230–396 (DFKGNISKEN…KEGRIRTFNF (167 aa)). Residue 243–250 (GPTGSGKT) coordinates ATP. Residues 339–342 (DEEH) carry the DEAH box motif. Zn(2+) contacts are provided by Cys-452, Cys-455, Cys-461, Cys-464, Cys-479, Cys-482, Cys-492, and Cys-495. The Helicase C-terminal domain occupies 487–643 (GLVESCPRCG…EELERRKALG (157 aa)).

This sequence belongs to the helicase family. PriA subfamily. As to quaternary structure, component of the replication restart primosome. Zn(2+) is required as a cofactor.

The catalysed reaction is Couples ATP hydrolysis with the unwinding of duplex DNA by translocating in the 3'-5' direction.. The enzyme catalyses ATP + H2O = ADP + phosphate + H(+). In terms of biological role, initiates the restart of stalled replication forks, which reloads the replicative helicase on sites other than the origin of replication. Recognizes and binds to abandoned replication forks and remodels them to uncover a helicase loading site. Promotes assembly of the primosome at these replication forks. The chain is Replication restart protein PriA from Thermotoga maritima (strain ATCC 43589 / DSM 3109 / JCM 10099 / NBRC 100826 / MSB8).